We begin with the raw amino-acid sequence, 355 residues long: Peptide chain release factor 1 (355 aa).

At Gln231 the chain carries N5-methylglutamine. The segment covering 280–291 (SERLAKESEARK) has biased composition (basic and acidic residues). The tract at residues 280–303 (SERLAKESEARKSQVGSGDRSERI) is disordered.

This sequence belongs to the prokaryotic/mitochondrial release factor family. Methylated by PrmC. Methylation increases the termination efficiency of RF1.

Its subcellular location is the cytoplasm. Peptide chain release factor 1 directs the termination of translation in response to the peptide chain termination codons UAG and UAA. The polypeptide is Peptide chain release factor 1 (Campylobacter jejuni (strain RM1221)).